The following is a 478-amino-acid chain: Lipoprotein lipase (478 aa).

Positions Met-1 to Ala-28 are cleaved as a signal peptide. Residues Lys-35 to Thr-56 are interaction with GPIHBP1. Cys-57 and Cys-70 are oxidised to a cystine. The N-linked (GlcNAc...) asparagine glycan is linked to Asn-73. A 3'-nitrotyrosine modification is found at Tyr-124. The active-site Nucleophile is Ser-162. Asp-186 acts as the Charge relay system in catalysis. Residue Tyr-194 is modified to 3'-nitrotyrosine. Positions 197, 200, 202, and 205 each coordinate Ca(2+). Cys-246 and Cys-269 are joined by a disulfide. The tract at residues Cys-246–Cys-269 is essential for determining substrate specificity. Residue His-271 is the Charge relay system of the active site. An N-linked (GlcNAc...) asparagine glycan is attached at Asn-287. 2 disulfide bridges follow: Cys-294-Cys-313 and Cys-305-Cys-308. In terms of domain architecture, PLAT spans Phe-344–Lys-467. A 3'-nitrotyrosine modification is found at Tyr-346. N-linked (GlcNAc...) asparagine glycosylation occurs at Asn-389. An important for interaction with lipoprotein particles region spans residues Trp-420 to Trp-424. The important for heparin binding stretch occupies residues Lys-433–Lys-437. Residues Ile-446–Asp-470 form an interaction with GPIHBP1 region. An intrachain disulfide couples Cys-448 to Cys-468.

It belongs to the AB hydrolase superfamily. Lipase family. Homodimer. Interacts with GPIHBP1 with 1:1 stoichiometry. Interacts with APOC2; the interaction activates LPL activity in the presence of lipids. Interaction with heparan sulfate proteoglycans is required to protect LPL against loss of activity. Associates with lipoprotein particles in blood plasma. Interacts with LMF1 and SEL1L; interaction with SEL1L is required to prevent aggregation of newly synthesized LPL in the endoplasmic reticulum (ER), and for normal export of LPL from the ER to the extracellular space. Interacts with SORL1; SORL1 acts as a sorting receptor, promoting LPL localization to endosomes and later to lysosomes, leading to degradation of newly synthesized LPL. In terms of processing, tyrosine nitration after lipopolysaccharide (LPS) challenge down-regulates the lipase activity. As to expression, detected in milk (at protein level).

It localises to the cell membrane. The protein resides in the secreted. It is found in the extracellular space. The protein localises to the extracellular matrix. It carries out the reaction a triacylglycerol + H2O = a diacylglycerol + a fatty acid + H(+). The enzyme catalyses a 1,2-diacyl-sn-glycero-3-phosphocholine + H2O = a 2-acyl-sn-glycero-3-phosphocholine + a fatty acid + H(+). The catalysed reaction is 1,2,3-tri-(9Z-octadecenoyl)-glycerol + H2O = di-(9Z)-octadecenoylglycerol + (9Z)-octadecenoate + H(+). It catalyses the reaction 1,2-di-(9Z-octadecenoyl)-sn-glycero-3-phosphocholine + H2O = (9Z-octadecenoyl)-sn-glycero-3-phosphocholine + (9Z)-octadecenoate + H(+). It carries out the reaction 1,2,3-tributanoylglycerol + H2O = dibutanoylglycerol + butanoate + H(+). The enzyme catalyses 1,2-dihexadecanoyl-sn-glycero-3-phosphocholine + H2O = hexadecanoyl-sn-glycero-3-phosphocholine + hexadecanoate + H(+). The apolipoprotein APOC2 acts as a coactivator of LPL activity. Ca(2+) binding promotes protein stability and formation of the active homodimer. Interaction with GPIHBP1 protects LPL against inactivation by ANGPTL4. Its function is as follows. Key enzyme in triglyceride metabolism. Catalyzes the hydrolysis of triglycerides from circulating chylomicrons and very low density lipoproteins (VLDL), and thereby plays an important role in lipid clearance from the blood stream, lipid utilization and storage. Although it has both phospholipase and triglyceride lipase activities it is primarily a triglyceride lipase with low but detectable phospholipase activity. Mediates margination of triglyceride-rich lipoprotein particles in capillaries. Recruited to its site of action on the luminal surface of vascular endothelium by binding to GPIHBP1 and cell surface heparan sulfate proteoglycans. The polypeptide is Lipoprotein lipase (LPL) (Bos taurus (Bovine)).